We begin with the raw amino-acid sequence, 269 residues long: Putative pyruvate, phosphate dikinase regulatory protein (269 aa).

151 to 158 provides a ligand contact to ADP; that stretch reads GVSRSSKT.

Belongs to the pyruvate, phosphate/water dikinase regulatory protein family. PDRP subfamily.

The enzyme catalyses N(tele)-phospho-L-histidyl/L-threonyl-[pyruvate, phosphate dikinase] + ADP = N(tele)-phospho-L-histidyl/O-phospho-L-threonyl-[pyruvate, phosphate dikinase] + AMP + H(+). It carries out the reaction N(tele)-phospho-L-histidyl/O-phospho-L-threonyl-[pyruvate, phosphate dikinase] + phosphate + H(+) = N(tele)-phospho-L-histidyl/L-threonyl-[pyruvate, phosphate dikinase] + diphosphate. Functionally, bifunctional serine/threonine kinase and phosphorylase involved in the regulation of the pyruvate, phosphate dikinase (PPDK) by catalyzing its phosphorylation/dephosphorylation. This is Putative pyruvate, phosphate dikinase regulatory protein from Geobacter metallireducens (strain ATCC 53774 / DSM 7210 / GS-15).